The chain runs to 414 residues: Transforming growth factor beta-2 proprotein (414 aa).

The signal sequence occupies residues 1-20 (MHYCVLSAFLLLHLVTAALS). 3 N-linked (GlcNAc...) asparagine glycosylation sites follow: asparagine 72, asparagine 140, and asparagine 241. 4 disulfide bridges follow: cysteine 309–cysteine 318, cysteine 317–cysteine 380, cysteine 346–cysteine 411, and cysteine 350–cysteine 413.

The protein belongs to the TGF-beta family. In terms of assembly, interacts with the serine proteases, HTRA1 and HTRA3. Interacts with ASPN. Interacts with MFAP5. Interacts with Transforming growth factor beta-2 (TGF-beta-2) chain; interaction is non-covalent and maintains (TGF-beta-2) in a latent state. Interacts with LRRC32/GARP; leading to regulate activation of TGF-beta-2. Interacts with NREP; the interaction results in a decrease in TGFB2 autoinduction. As to quaternary structure, transforming growth factor beta-2: Homodimer; disulfide-linked. Transforming growth factor beta-2: Interacts with TGF-beta receptors (TGFBR1 and TGFBR2), leading to signal transduction. The precursor proprotein is cleaved in the Golgi apparatus to form Transforming growth factor beta-2 (TGF-beta-2) and Latency-associated peptide (LAP) chains, which remain non-covalently linked, rendering TGF-beta-2 inactive.

It is found in the secreted. The protein localises to the extracellular space. Its subcellular location is the extracellular matrix. Precursor of the Latency-associated peptide (LAP) and Transforming growth factor beta-2 (TGF-beta-2) chains, which constitute the regulatory and active subunit of TGF-beta-2, respectively. Functionally, required to maintain the Transforming growth factor beta-2 (TGF-beta-2) chain in a latent state during storage in extracellular matrix. Associates non-covalently with TGF-beta-2 and regulates its activation via interaction with 'milieu molecules', such as LTBP1 and LRRC32/GARP, that control activation of TGF-beta-2. In terms of biological role, multifunctional protein that regulates various processes such as angiogenesis and heart development. Activation into mature form follows different steps: following cleavage of the proprotein in the Golgi apparatus, Latency-associated peptide (LAP) and Transforming growth factor beta-2 (TGF-beta-2) chains remain non-covalently linked rendering TGF-beta-2 inactive during storage in extracellular matrix. At the same time, LAP chain interacts with 'milieu molecules', such as LTBP1 and LRRC32/GARP, that control activation of TGF-beta-2 and maintain it in a latent state during storage in extracellular milieus. Once activated following release of LAP, TGF-beta-2 acts by binding to TGF-beta receptors (TGFBR1 and TGFBR2), which transduce signal. This Mustela putorius furo (European domestic ferret) protein is Transforming growth factor beta-2 proprotein (TGFB2).